The sequence spans 58 residues: UPF0391 membrane protein Shew185_1413 (58 aa).

2 consecutive transmembrane segments (helical) span residues 6-26 and 28-48; these read LVFL…IAGA and AGIA…SLLI.

Belongs to the UPF0391 family.

The protein localises to the cell membrane. The sequence is that of UPF0391 membrane protein Shew185_1413 from Shewanella baltica (strain OS185).